A 330-amino-acid chain; its full sequence is Phenylalanine--tRNA ligase alpha subunit (330 aa).

Glu255 is a binding site for Mg(2+).

Belongs to the class-II aminoacyl-tRNA synthetase family. Phe-tRNA synthetase alpha subunit type 1 subfamily. As to quaternary structure, tetramer of two alpha and two beta subunits. The cofactor is Mg(2+).

The protein localises to the cytoplasm. The enzyme catalyses tRNA(Phe) + L-phenylalanine + ATP = L-phenylalanyl-tRNA(Phe) + AMP + diphosphate + H(+). The sequence is that of Phenylalanine--tRNA ligase alpha subunit from Acinetobacter baumannii (strain SDF).